Reading from the N-terminus, the 283-residue chain is Shikimate dehydrogenase (NADP(+)) (283 aa).

Shikimate-binding positions include 19-21 (SFS) and threonine 66. Lysine 70 (proton acceptor) is an active-site residue. Glutamate 82 contacts NADP(+). 2 residues coordinate shikimate: asparagine 91 and aspartate 106. NADP(+) is bound by residues 129-133 (GAGGA) and isoleucine 225. Tyrosine 227 contributes to the shikimate binding site. Glycine 248 is an NADP(+) binding site.

The protein belongs to the shikimate dehydrogenase family. As to quaternary structure, homodimer.

The enzyme catalyses shikimate + NADP(+) = 3-dehydroshikimate + NADPH + H(+). Its pathway is metabolic intermediate biosynthesis; chorismate biosynthesis; chorismate from D-erythrose 4-phosphate and phosphoenolpyruvate: step 4/7. Its function is as follows. Involved in the biosynthesis of the chorismate, which leads to the biosynthesis of aromatic amino acids. Catalyzes the reversible NADPH linked reduction of 3-dehydroshikimate (DHSA) to yield shikimate (SA). In Methanosphaera stadtmanae (strain ATCC 43021 / DSM 3091 / JCM 11832 / MCB-3), this protein is Shikimate dehydrogenase (NADP(+)).